We begin with the raw amino-acid sequence, 426 residues long: FK506-binding protein 3 (426 aa).

Disordered regions lie at residues 37 to 143 and 171 to 314; these read SLDP…PKHQ and TGNY…KKKK. Acidic residues-rich tracts occupy residues 65 to 94, 111 to 131, and 181 to 225; these read DYFEDDDDDEEEDDEEDELDDEEEEEEAEE, EDEEEDDEEEDDEDNDEDDVS, and QDEE…SEEE. Composition is skewed to basic and acidic residues over residues 226-257, 264-278, and 287-311; these read GTPKIEEIVEEKEKVKESPKESKKRVAEESTS, KKDEKKSVQFSKELE, and VEKDNKKATPTKDKKETPVKDDGDK. Positions 340 to 426 constitute a PPIase FKBP-type domain; the sequence is GAKVGIRYIG…TFDIKLVSLK (87 aa).

Belongs to the FKBP-type PPIase family. FKBP3/4 subfamily.

Its subcellular location is the nucleus. It is found in the nucleolus. It catalyses the reaction [protein]-peptidylproline (omega=180) = [protein]-peptidylproline (omega=0). Inhibited by both FK506 and rapamycin. In terms of biological role, PPIases accelerate the folding of proteins. It catalyzes the cis-trans isomerization of proline imidic peptide bonds in oligopeptides. The polypeptide is FK506-binding protein 3 (FPR3) (Candida albicans (strain SC5314 / ATCC MYA-2876) (Yeast)).